Here is a 382-residue protein sequence, read N- to C-terminus: Protein shisa-9A (382 aa).

The N-terminal stretch at 1–26 is a signal peptide; that stretch reads MKWTVLLLEYFLVKVLVLLYSADGEA. Residues 27–132 lie on the Extracellular side of the membrane; that stretch reads QQLEGFIMLS…DPRHDPTKDK (106 aa). An N-linked (GlcNAc...) asparagine glycan is attached at Asn39. Residues 133–153 form a helical membrane-spanning segment; the sequence is TNLIVYIICGVVAIMALVGIF. Over 154-382 the chain is Cytoplasmic; sequence TKLGLEKAHR…VTNSKAEVTV (229 aa).

This sequence belongs to the shisa family. SHISA9 subfamily. As to quaternary structure, component of some AMPA receptors (ionotropic glutamate receptors) complex.

The protein localises to the cell projection. It localises to the dendritic spine membrane. The protein resides in the synapse. Its function is as follows. Regulator of short-term neuronal synaptic plasticity in the dentate gyrus. Associates with AMPA receptors (ionotropic glutamate receptors) in synaptic spines and promotes AMPA receptor desensitization at excitatory synapses. In Danio rerio (Zebrafish), this protein is Protein shisa-9A (shisa9a).